The sequence spans 264 residues: Indole-3-glycerol phosphate synthase (264 aa).

It belongs to the TrpC family.

It carries out the reaction 1-(2-carboxyphenylamino)-1-deoxy-D-ribulose 5-phosphate + H(+) = (1S,2R)-1-C-(indol-3-yl)glycerol 3-phosphate + CO2 + H2O. It functions in the pathway amino-acid biosynthesis; L-tryptophan biosynthesis; L-tryptophan from chorismate: step 4/5. The protein is Indole-3-glycerol phosphate synthase of Albidiferax ferrireducens (strain ATCC BAA-621 / DSM 15236 / T118) (Rhodoferax ferrireducens).